The chain runs to 250 residues: MSVTMREMLEAGVHFGHQTRFWNPKMAPFIFGHRNKIHIINLEKSLPMFQEAQKFAKQLTANRGTILMVGTKRQARELLAAEAQRAGVPYVDQRWLGGMLTNFKTVKTSIKRLKDMKAQQEAGLESMSKKEQLTFTREIEKLEKDIGGIQDMNALPDAIFIIDVGFHKIAVAEAKKLGIPLIGVVDSNHSPEGIDYVIPGNDDSAKAVALYARGIADAIIEGRANAVNDVVKAAAPEGSDEFVEVEESAA.

The protein belongs to the universal ribosomal protein uS2 family.

The polypeptide is Small ribosomal subunit protein uS2 (Paracidovorax citrulli (strain AAC00-1) (Acidovorax citrulli)).